The sequence spans 631 residues: Phosphomethylpyrimidine synthase (631 aa).

Substrate is bound by residues Asn239, Met268, Tyr297, His333, 353–355 (SRG), 394–397 (DGLR), and Glu433. His437 provides a ligand contact to Zn(2+). A substrate-binding site is contributed by Tyr460. Residue His501 coordinates Zn(2+). Residues Cys581, Cys584, and Cys589 each coordinate [4Fe-4S] cluster.

Belongs to the ThiC family. In terms of assembly, homodimer. [4Fe-4S] cluster is required as a cofactor.

It catalyses the reaction 5-amino-1-(5-phospho-beta-D-ribosyl)imidazole + S-adenosyl-L-methionine = 4-amino-2-methyl-5-(phosphooxymethyl)pyrimidine + CO + 5'-deoxyadenosine + formate + L-methionine + 3 H(+). Its pathway is cofactor biosynthesis; thiamine diphosphate biosynthesis. Functionally, catalyzes the synthesis of the hydroxymethylpyrimidine phosphate (HMP-P) moiety of thiamine from aminoimidazole ribotide (AIR) in a radical S-adenosyl-L-methionine (SAM)-dependent reaction. In Salmonella enteritidis PT4 (strain P125109), this protein is Phosphomethylpyrimidine synthase.